The primary structure comprises 534 residues: Peptide chain release factor 3 (534 aa).

Residues 9 to 278 (ARRRTFAIIS…FFVEHAPSPQ (270 aa)) enclose the tr-type G domain. GTP contacts are provided by residues 18–25 (SHPDAGKT), 86–90 (DTPGH), and 140–143 (NKLD).

It belongs to the TRAFAC class translation factor GTPase superfamily. Classic translation factor GTPase family. PrfC subfamily.

It is found in the cytoplasm. In terms of biological role, increases the formation of ribosomal termination complexes and stimulates activities of RF-1 and RF-2. It binds guanine nucleotides and has strong preference for UGA stop codons. It may interact directly with the ribosome. The stimulation of RF-1 and RF-2 is significantly reduced by GTP and GDP, but not by GMP. The protein is Peptide chain release factor 3 of Xylella fastidiosa (strain M12).